The following is a 130-amino-acid chain: Small ribosomal subunit protein uS9 (130 aa).

Belongs to the universal ribosomal protein uS9 family.

This is Small ribosomal subunit protein uS9 from Serratia proteamaculans (strain 568).